Here is a 292-residue protein sequence, read N- to C-terminus: WRKY transcription factor 55 (292 aa).

A disordered region spans residues 133 to 155; the sequence is VERSGASGSSTPRQRRRKDEGEE. The WRKY DNA-binding region spans 167 to 235; sequence NTDLPPDDNH…YRGSHTCYNS (69 aa).

Belongs to the WRKY group III family.

Its subcellular location is the nucleus. Its function is as follows. Transcription factor. Interacts specifically with the W box (5'-(T)TGAC[CT]-3'), a frequently occurring elicitor-responsive cis-acting element. This chain is WRKY transcription factor 55 (WRKY55), found in Arabidopsis thaliana (Mouse-ear cress).